Reading from the N-terminus, the 99-residue chain is NADH-quinone oxidoreductase subunit K (99 aa).

Transmembrane regions (helical) follow at residues 2 to 22, 28 to 48, and 60 to 80; these read PVEYYLWLASILFGIGLLGVL, LILMMSVELMLNAANLTFLAF, and IAFFVIAVAAAEAAVGLAVVI.

The protein belongs to the complex I subunit 4L family. In terms of assembly, NDH-1 is composed of 14 different subunits. Subunits NuoA, H, J, K, L, M, N constitute the membrane sector of the complex.

It is found in the cell inner membrane. The catalysed reaction is a quinone + NADH + 5 H(+)(in) = a quinol + NAD(+) + 4 H(+)(out). NDH-1 shuttles electrons from NADH, via FMN and iron-sulfur (Fe-S) centers, to quinones in the respiratory chain. The immediate electron acceptor for the enzyme in this species is believed to be ubiquinone. Couples the redox reaction to proton translocation (for every two electrons transferred, four hydrogen ions are translocated across the cytoplasmic membrane), and thus conserves the redox energy in a proton gradient. This Anaeromyxobacter dehalogenans (strain 2CP-C) protein is NADH-quinone oxidoreductase subunit K.